Consider the following 131-residue polypeptide: Small ribosomal subunit protein uS8 (131 aa).

The protein belongs to the universal ribosomal protein uS8 family. In terms of assembly, part of the 30S ribosomal subunit. Contacts proteins S5 and S12.

Functionally, one of the primary rRNA binding proteins, it binds directly to 16S rRNA central domain where it helps coordinate assembly of the platform of the 30S subunit. The sequence is that of Small ribosomal subunit protein uS8 from Thiobacillus denitrificans (strain ATCC 25259 / T1).